Here is a 91-residue protein sequence, read N- to C-terminus: Probable Fe(2+)-trafficking protein (91 aa).

It belongs to the Fe(2+)-trafficking protein family.

Its function is as follows. Could be a mediator in iron transactions between iron acquisition and iron-requiring processes, such as synthesis and/or repair of Fe-S clusters in biosynthetic enzymes. This chain is Probable Fe(2+)-trafficking protein, found in Burkholderia multivorans (strain ATCC 17616 / 249).